Consider the following 255-residue polypeptide: 5'-nucleotidase SurE (255 aa).

Residues D8, D9, S40, and N93 each contribute to the a divalent metal cation site.

It belongs to the SurE nucleotidase family. A divalent metal cation serves as cofactor.

The protein localises to the cytoplasm. The enzyme catalyses a ribonucleoside 5'-phosphate + H2O = a ribonucleoside + phosphate. Functionally, nucleotidase that shows phosphatase activity on nucleoside 5'-monophosphates. The sequence is that of 5'-nucleotidase SurE from Bradyrhizobium sp. (strain ORS 278).